The following is a 2472-amino-acid chain: Highly reducing polyketide synthase xilA (2472 aa).

Residues M1 to D417 enclose the Ketosynthase family 3 (KS3) domain. Catalysis depends on for beta-ketoacyl synthase activity residues C162, H298, and H340. The tract at residues N442–D502 is disordered. Over residues T450 to N489 the composition is skewed to low complexity. In terms of domain architecture, Malonyl-CoA:ACP transacylase (MAT) spans F597 to V932. The interval H991–F1129 is N-terminal hotdog fold. One can recognise a PKS/mFAS DH domain in the interval H991–S1294. The Proton acceptor; for dehydratase activity role is filled by H1023. The segment at G1141–S1294 is C-terminal hotdog fold. D1207 acts as the Proton donor; for dehydratase activity in catalysis. The segment at N1289 to I1505 is methyltransferase (CMeT) domain. The region spanning G1724–I2036 is the Enoyl reductase (ER) domain. Positions A2060–K2239 constitute a Ketoreductase (KR) domain. Residues E2391–A2469 enclose the Carrier domain. S2428 bears the O-(pantetheine 4'-phosphoryl)serine mark.

Pantetheine 4'-phosphate serves as cofactor.

It functions in the pathway secondary metabolite biosynthesis. Highly reducing polyketide synthase; part of the gene cluster that mediates the biosynthesis of the 6-methyl-2-pyrone derivative xylariolide D. XilA produces the 5-alkyl-6-methyl-2-pyrone backbone called prexylariolide D via sequential condensations of 4 malonyl-CoA units with one acetyl-CoA starter unit. During the biosynthesis, the linear polyketide chain is branched by the addition of an acetyl unit as the origin of the methyl group at the 2-pyrone ring. Prexylariolide D is then hydroxylated at the side chain by xilC to form the final product, xylariolide D. The chain is Highly reducing polyketide synthase xilA from Penicillium crustosum (Blue mold fungus).